The primary structure comprises 279 residues: S-formylglutathione hydrolase (279 aa).

Active-site charge relay system residues include Ser150, Asp226, and His258.

Belongs to the esterase D family.

It carries out the reaction S-formylglutathione + H2O = formate + glutathione + H(+). In terms of biological role, serine hydrolase involved in the detoxification of formaldehyde. Hydrolyzes S-formylglutathione to glutathione and formate. The sequence is that of S-formylglutathione hydrolase (fghA) from Paracoccus denitrificans (strain Pd 1222).